The following is a 130-amino-acid chain: uncharacterized protein (130 aa).

The first 20 residues, 1–20 (MFNCLTKLVILVCLKYVAKA), serve as a signal peptide directing secretion.

This is an uncharacterized protein from Saccharomyces cerevisiae (strain ATCC 204508 / S288c) (Baker's yeast).